The following is a 44-amino-acid chain: Photosystem I reaction center subunit IX (44 aa).

The chain crosses the membrane as a helical span at residues 7-27 (YLSVAPVLSTLSLGFFAGFLI).

It belongs to the PsaJ family.

Its subcellular location is the plastid membrane. In terms of biological role, may help in the organization of the PsaE and PsaF subunits. This Cuscuta obtusiflora (Peruvian dodder) protein is Photosystem I reaction center subunit IX.